Reading from the N-terminus, the 345-residue chain is MTILNPITFPVILESLLASNDLTEEQSNYLMNSWLDNKIEPVQTGAFLAAFRAKGVSGDELSAMAKILQDASTTPSDLPSFDLVDTCGTGGDGANTFNISTGVAFVSAALGVKIAKHGNRSASGKVGSADVLENLGLPLNVSSGKVVEALKKLGITFLFAPSWHPSLVNLAPLRKSLGVRTIFNLLGPLVNPLRPKSQVLGVAKADLLDPMSVALKGMGLKRAVVVHGAGGLDEASLAGANQFRFLDKDVIRSEIISPGDLGLTQISNESLKGDGLKTNSHILKSLLNGEGNQYHKEVIALNTALVLWVSGTEDDLSSGVKRALDCLDTDKSWLLFEQLRDFLAT.

5-phospho-alpha-D-ribose 1-diphosphate contacts are provided by residues Gly-88, 91–92, Thr-96, 98–101, 116–124, and Ser-128; these read GD, NIST, and KHGNRSASG. Gly-88 provides a ligand contact to anthranilate. A Mg(2+)-binding site is contributed by Ser-100. Residue Asn-119 participates in anthranilate binding. Residue Arg-174 coordinates anthranilate. Residues Asp-233 and Glu-234 each contribute to the Mg(2+) site.

The protein belongs to the anthranilate phosphoribosyltransferase family. In terms of assembly, homodimer. The cofactor is Mg(2+).

It carries out the reaction N-(5-phospho-beta-D-ribosyl)anthranilate + diphosphate = 5-phospho-alpha-D-ribose 1-diphosphate + anthranilate. The protein operates within amino-acid biosynthesis; L-tryptophan biosynthesis; L-tryptophan from chorismate: step 2/5. In terms of biological role, catalyzes the transfer of the phosphoribosyl group of 5-phosphorylribose-1-pyrophosphate (PRPP) to anthranilate to yield N-(5'-phosphoribosyl)-anthranilate (PRA). The polypeptide is Anthranilate phosphoribosyltransferase (Prochlorococcus marinus (strain NATL2A)).